Here is an 80-residue protein sequence, read N- to C-terminus: Small ribosomal subunit protein uS17 (80 aa).

The protein belongs to the universal ribosomal protein uS17 family. As to quaternary structure, part of the 30S ribosomal subunit.

Functionally, one of the primary rRNA binding proteins, it binds specifically to the 5'-end of 16S ribosomal RNA. This is Small ribosomal subunit protein uS17 from Cereibacter sphaeroides (strain ATCC 17025 / ATH 2.4.3) (Rhodobacter sphaeroides).